The chain runs to 582 residues: Solute carrier family 15 member 3 (582 aa).

Residues 1–20 (MSALRAEQQPSRSGERQPLV) form a disordered region. Transmembrane regions (helical) follow at residues 33-53 (TAAA…FGVT), 77-97 (LLFL…ADVY), 102-122 (LAIS…LTTI), and 155-175 (PYCA…ASSV). N178 is a glycosylation site (N-linked (GlcNAc...) asparagine). A helical transmembrane segment spans residues 201 to 221 (WFYWSINLGAILSLLVVAFIE). N-linked (GlcNAc...) asparagine glycosylation is present at N223. 2 helical membrane passes run 232–252 (IIVG…PVFI) and 312–332 (FQVL…WMVY). Residue N357 is glycosylated (N-linked (GlcNAc...) asparagine). The next 2 membrane-spanning stretches (helical) occupy residues 371–391 (IPEA…VPVK) and 409–429 (LQKM…AGVL). N440 carries an N-linked (GlcNAc...) asparagine glycan. 3 helical membrane-spanning segments follow: residues 466 to 485 (YLLI…EFAY), 498 to 518 (GIFF…VALL), and 541 to 561 (LYFF…LWIA). N575 is a glycosylation site (N-linked (GlcNAc...) asparagine).

Belongs to the major facilitator superfamily. Proton-dependent oligopeptide transporter (POT/PTR) (TC 2.A.17) family. Abundant expression in lung, spleen and thymus, and detected faintly in brain, liver, adrenal gland and heart at protein level.

The protein localises to the lysosome membrane. Its subcellular location is the endosome membrane. It carries out the reaction N-acetyl-D-muramoyl-L-alanyl-D-isoglutamine(out) + n H(+)(out) = N-acetyl-D-muramoyl-L-alanyl-D-isoglutamine(in) + n H(+)(in). It catalyses the reaction glycylglycylglycine(out) + n H(+)(out) = glycylglycylglycine(in) + n H(+)(in). The enzyme catalyses carnosine(out) + n H(+)(out) = carnosine(in) + n H(+)(in). The catalysed reaction is L-histidine(out) + n H(+)(out) = L-histidine(in) + n H(+)(in). In terms of biological role, proton-coupled amino-acid transporter that transports free histidine and certain di- and tripeptides, and is involved in innate immune response. Also able to transport carnosine. Involved in the detection of microbial pathogens by toll-like receptors (TLRs) and NOD-like receptors (NLRs), probably by mediating transport of bacterial peptidoglycans across the endolysosomal membrane: catalyzes the transport of certain bacterial peptidoglycans, such as muramyl dipeptide (MDP), the NOD2 ligand. This chain is Solute carrier family 15 member 3 (Slc15a3), found in Rattus norvegicus (Rat).